Consider the following 21-residue polypeptide: Magainin-B1 (21 aa).

Expressed by the skin glands.

The protein resides in the secreted. Its function is as follows. Has no antimicrobial activity against tested bacteria. This is Magainin-B1 from Xenopus borealis (Kenyan clawed frog).